Reading from the N-terminus, the 68-residue chain is Large ribosomal subunit protein bL28 (68 aa).

Residues 1-30 form a disordered region; that stretch reads MAKICDHCGKKPQSGNNVSHANNKSKRRFE. Polar residues predominate over residues 13 to 22; sequence QSGNNVSHAN.

It belongs to the bacterial ribosomal protein bL28 family.

In Solidesulfovibrio magneticus (strain ATCC 700980 / DSM 13731 / RS-1) (Desulfovibrio magneticus), this protein is Large ribosomal subunit protein bL28.